The primary structure comprises 172 residues: Scytalone dehydratase-like protein Arp1 (172 aa).

Tyr-49 is a substrate binding site. Residues His-84 and His-109 contribute to the active site. A substrate-binding site is contributed by Asn-130.

The protein belongs to the scytalone dehydratase family. In terms of assembly, homotrimer. Each subunit contains an active site, located in the central part of the hydrophobic core of the monomer, which functions independently.

Its function is as follows. Scytalone dehydratase-like protein; part of the Pks2 gene cluster that mediates the formation of infectious structures (appressoria), enabling these fungi to kill insects faster. The product of the Pks2 gene cluster is different from the one of Pks1 and has still not been identified. The polypeptide is Scytalone dehydratase-like protein Arp1 (Metarhizium robertsii (strain ARSEF 23 / ATCC MYA-3075) (Metarhizium anisopliae (strain ARSEF 23))).